Here is a 190-residue protein sequence, read N- to C-terminus: Interferon alpha-7 (190 aa).

An N-terminal signal peptide occupies residues 1–23 (MARLCAFLMVLAVMSYWPTCCLG). 2 disulfide bridges follow: Cys-24–Cys-122 and Cys-52–Cys-162. The N-linked (GlcNAc...) asparagine glycan is linked to Asn-101.

The protein belongs to the alpha/beta interferon family.

It localises to the secreted. Produced by macrophages, IFN-alpha have antiviral activities. Interferon stimulates the production of two enzymes: a protein kinase and an oligoadenylate synthetase. The sequence is that of Interferon alpha-7 (Ifna7) from Mus musculus (Mouse).